A 369-amino-acid chain; its full sequence is Transmembrane protein 198 (369 aa).

The next 7 membrane-spanning stretches (helical) occupy residues 37-57 (VVPS…CFFG), 60-80 (CFKA…IFLL), 93-113 (VEAS…VTML), 117-137 (VGLF…TLIG), 148-168 (SVWV…VLTL), 181-201 (VFGA…FALV), and 216-236 (VCWT…LGVL). The disordered stretch occupies residues 266–308 (RQKEERRESSRKKKRKQPQSAQHTHAAKALHPEPAYRRKPNPI).

This sequence belongs to the TMEM198 family.

Its subcellular location is the membrane. The protein is Transmembrane protein 198 (tmem198ab) of Danio rerio (Zebrafish).